The following is a 427-amino-acid chain: Enolase (427 aa).

Gln-163 serves as a coordination point for (2R)-2-phosphoglycerate. The active-site Proton donor is the Glu-205. Residues Asp-242, Glu-285, and Asp-312 each coordinate Mg(2+). Positions 337, 366, 367, and 388 each coordinate (2R)-2-phosphoglycerate. The Proton acceptor role is filled by Lys-337.

This sequence belongs to the enolase family. It depends on Mg(2+) as a cofactor.

The protein localises to the cytoplasm. It localises to the secreted. The protein resides in the cell surface. It carries out the reaction (2R)-2-phosphoglycerate = phosphoenolpyruvate + H2O. It functions in the pathway carbohydrate degradation; glycolysis; pyruvate from D-glyceraldehyde 3-phosphate: step 4/5. Catalyzes the reversible conversion of 2-phosphoglycerate (2-PG) into phosphoenolpyruvate (PEP). It is essential for the degradation of carbohydrates via glycolysis. This is Enolase from Rhodopseudomonas palustris (strain TIE-1).